A 50-amino-acid chain; its full sequence is Cuticle protein CP498 (50 aa).

A run of 2 repeats spans residues 6–23 (ATVGESGIITPGGRLIQL) and 30–47 (ILEGPSAALLSNGDFVTY).

Calcified shell.

The polypeptide is Cuticle protein CP498 (Cancer pagurus (Rock crab)).